The chain runs to 247 residues: UDP-2,3-diacylglucosamine hydrolase (247 aa).

Mn(2+) is bound by residues D8, H10, D41, N79, and H114. Substrate is bound at residue 79 to 80 (NR). Residues D122, S160, D171, N174, and H202 each contribute to the substrate site. Residues H202 and H204 each contribute to the Mn(2+) site.

This sequence belongs to the LpxH family. Mn(2+) is required as a cofactor.

Its subcellular location is the cell inner membrane. It carries out the reaction UDP-2-N,3-O-bis[(3R)-3-hydroxytetradecanoyl]-alpha-D-glucosamine + H2O = 2-N,3-O-bis[(3R)-3-hydroxytetradecanoyl]-alpha-D-glucosaminyl 1-phosphate + UMP + 2 H(+). It participates in glycolipid biosynthesis; lipid IV(A) biosynthesis; lipid IV(A) from (3R)-3-hydroxytetradecanoyl-[acyl-carrier-protein] and UDP-N-acetyl-alpha-D-glucosamine: step 4/6. In terms of biological role, hydrolyzes the pyrophosphate bond of UDP-2,3-diacylglucosamine to yield 2,3-diacylglucosamine 1-phosphate (lipid X) and UMP by catalyzing the attack of water at the alpha-P atom. Involved in the biosynthesis of lipid A, a phosphorylated glycolipid that anchors the lipopolysaccharide to the outer membrane of the cell. The polypeptide is UDP-2,3-diacylglucosamine hydrolase (Xanthomonas oryzae pv. oryzae (strain MAFF 311018)).